A 630-amino-acid polypeptide reads, in one-letter code: MLMRKVPGFVPASPWGLRLPQKFLFLLFLSGLVTLCFGALFLLPHSSRLKRLFLAPRTQQPGLEVVAEIAGHAPAREQEPPPNPAPAAPAPGEDDPSSWASPRRRKGGLRRTRPTGPREEATAARGNSIPASRPGDEGVPFRFDFNAFRSRLRHPVLGTRADESQEPQSQVRAQREKIKEMMQFAWQSYKRYAMGKNELRPLTKDGYEGNMFGGLSGATVIDSLDTLYLMELKEEFQEAKAWVGESFHLNVSGEASLFEVNIRYIGGLLSAFYLTGEEVFRIKAIRLGEKLLPAFNTPTGIPKGVVSFKSGNWGWATAGSSSILAEFGSLHLEFLHLTELSGNQVFAEKVRNIRKVLRKIEKPFGLYPNFLSPVSGNWVQHHVSVGGLGDSFYEYLIKSWLMSGKTDMEAKNMYYEALEAIETYLLNVSPGGLTYIAEWRGGILDHKMGHLACFSGGMIALGAEDAKEEKRAHYRELAAQITKTCHESYARSDTKLGPEAFWFNSGREAVATQLSESYYILRPEVVESYMYLWRQTHNPIYREWGWEVVLALEKYCRTEAGFSGIQDVYSSTPNHDNKQQSFFLAETLKYLYLLFSEDDLLSLEDWVFNTEAHPLPVNHSDSSGRAWGRH.

The Cytoplasmic portion of the chain corresponds to 1-22 (MLMRKVPGFVPASPWGLRLPQK). Residues 23–43 (FLFLLFLSGLVTLCFGALFLL) form a helical; Signal-anchor for type II membrane protein membrane-spanning segment. Residues 44–630 (PHSSRLKRLF…DSSGRAWGRH (587 aa)) lie on the Lumenal side of the membrane. The tract at residues 74–140 (PAREQEPPPN…ASRPGDEGVP (67 aa)) is disordered. Over residues 80 to 89 (PPPNPAPAAP) the composition is skewed to pro residues. Positions 102-113 (PRRRKGGLRRTR) are enriched in basic residues. Ser-164 bears the Phosphoserine mark. An N-linked (GlcNAc...) asparagine glycan is attached at Asn-250. The cysteines at positions 453 and 485 are disulfide-linked. Glu-499 (proton donor) is an active-site residue. Thr-610 contacts Ca(2+). A glycan (N-linked (GlcNAc...) asparagine) is linked at Asn-618.

Belongs to the glycosyl hydrolase 47 family. The cofactor is Ca(2+). As to expression, expressed in most tissues with the exception of lung, muscle and pancreas. Highly expressed in placenta.

Its subcellular location is the golgi apparatus membrane. The catalysed reaction is N(4)-(alpha-D-Man-(1-&gt;2)-alpha-D-Man-(1-&gt;2)-alpha-D-Man-(1-&gt;3)-[alpha-D-Man-(1-&gt;2)-alpha-D-Man-(1-&gt;3)-[alpha-D-Man-(1-&gt;2)-alpha-D-Man-(1-&gt;6)]-alpha-D-Man-(1-&gt;6)]-beta-D-Man-(1-&gt;4)-beta-D-GlcNAc-(1-&gt;4)-beta-D-GlcNAc)-L-asparaginyl-[protein] (N-glucan mannose isomer 9A1,2,3B1,2,3) + 4 H2O = N(4)-(alpha-D-Man-(1-&gt;3)-[alpha-D-Man-(1-&gt;3)-[alpha-D-Man-(1-&gt;6)]-alpha-D-Man-(1-&gt;6)]-beta-D-Man-(1-&gt;4)-beta-D-GlcNAc-(1-&gt;4)-beta-D-GlcNAc)-L-asparaginyl-[protein] (N-glucan mannose isomer 5A1,2) + 4 beta-D-mannose. It catalyses the reaction N(4)-(alpha-D-Man-(1-&gt;2)-alpha-D-Man-(1-&gt;2)-alpha-D-Man-(1-&gt;3)-[alpha-D-Man-(1-&gt;3)-[alpha-D-Man-(1-&gt;2)-alpha-D-Man-(1-&gt;6)]-alpha-D-Man-(1-&gt;6)]-beta-D-Man-(1-&gt;4)-beta-D-GlcNAc-(1-&gt;4)-beta-D-GlcNAc)-L-asparaginyl-[protein] (N-glucan mannose isomer 8A1,2,3B1,3) + 3 H2O = N(4)-(alpha-D-Man-(1-&gt;3)-[alpha-D-Man-(1-&gt;3)-[alpha-D-Man-(1-&gt;6)]-alpha-D-Man-(1-&gt;6)]-beta-D-Man-(1-&gt;4)-beta-D-GlcNAc-(1-&gt;4)-beta-D-GlcNAc)-L-asparaginyl-[protein] (N-glucan mannose isomer 5A1,2) + 3 beta-D-mannose. It functions in the pathway protein modification; protein glycosylation. Its activity is regulated as follows. Inhibited by both 1-deoxymannojirimycin and kifunensine. Its function is as follows. Involved in the maturation of Asn-linked oligosaccharides. Trim alpha-1,2-linked mannose residues from Man(9)GlcNAc(2) to produce first Man(8)GlcNAc(2) then Man(6)GlcNAc and a small amount of Man(5)GlcNAc. This chain is Mannosyl-oligosaccharide 1,2-alpha-mannosidase IC (MAN1C1), found in Homo sapiens (Human).